Here is a 954-residue protein sequence, read N- to C-terminus: MSWTYLLMLLFLLPYTGDAVPKINDGEDRVTVNVGDKVSLECRDAHLVTLAFQKSGLMKKPRDLKSRPLNNSETDQFFVIIKADLRHIGRYICTNTETQENTSVSLFVKDPARPFLDIPFIDVTEGADTVGMCFPTDPDMDIAIEKCDGSPLPENFTFTTDIEAGITIKTVQLAFDSCYVCSGNKSGTVKKSSTFSIHVKPVPKKVPTVFLSKSRQLVKTGEPFEVTCAVLDVFSTVKAQWLDVKEGVTKQANFRSSNVFSYNLTLKSDGVPYSESRTFTCQAENAIGQVNATFTLDVIDVGYVNLTVLENTTISVNAGDNLVLKVYIDAYPHPDDGVWTYFNETLLNTSDHYVATKDEGNNRYVSELHLIRLKGTEKGVYTFYTTNSDDDASVSFNIQVKTRPEILIAERTSEGTLQCVATGFPVPAIQWYFCPGSEQRCTDYPPLSPVNEKFIQENSSLGRIVVESTIDVNDLKKNGTVQCVASNEVESAYSVFSFAIKEKLRTHTLFTPLLIGFIAAAGLMCIAVAVLMYKYLQKPKYEIQWKVVEEINGNNYVYIDPTQLPYDNKWEFPRDRLCFGKILGAGAFGKVVEATAYGLLKEDSRLTVAVKMLKPSAHSTEREALMSELKVLSYLGHHKNIVNLLGACTVGGPTLVITEYCCYGDLLNYLRRKRDSFICPKFEDNSEAALYKNLLNTRDMGCEGMSEYIDMKPAVSYVVPTKTDKRRSGSFGDQDVSVSIPEEDDLALDTEDLINFSYQVAQGMNFLASKNCIHRDLAARNILLTHGRITKICDFGLARDIRNDSNYVVKGNARLPVKWMAPESIFHCVYTFESDVWSYGILLWEIFSLGSSPYPRIPVDSKFYKMIKDGYRMMSPECAPLEMYEIMRSCWNSDPLKRPTFKQIVQMVEQQLSDSKGNTPLPYPVSHVPLDHAVRINSVGSSTSSQPLLTNSDR.

An N-terminal signal peptide occupies residues 1–19 (MSWTYLLMLLFLLPYTGDA). Topologically, residues 20–512 (VPKINDGEDR…KLRTHTLFTP (493 aa)) are extracellular. Ig-like C2-type domains are found at residues 21–109 (PKIN…LFVK), 118–200 (IPFI…IHVK), and 207–299 (PTVF…LDVI). C42 and C93 are oxidised to a cystine. N70, N101, N155, N184, N263, N291, N305, N311, N343, N348, N458, and N478 each carry an N-linked (GlcNAc...) asparagine glycan. Intrachain disulfides connect C133–C181 and C147–C178. Residues C228 and C281 are joined by a disulfide bond. Ig-like C2-type domains are found at residues 308 to 401 (VLEN…IQVK) and 404 to 499 (PEIL…FSFA). C419 and C483 are oxidised to a cystine. The chain crosses the membrane as a helical span at residues 513–533 (LLIGFIAAAGLMCIAVAVLMY). The Cytoplasmic segment spans residues 534–954 (KYLQKPKYEI…SQPLLTNSDR (421 aa)). Y556 is a binding site for Mg(2+). 2 positions are modified to phosphotyrosine; by autocatalysis: Y556 and Y558. Residues 577-912 (LCFGKILGAG…QIVQMVEQQL (336 aa)) form the Protein kinase domain. ATP-binding positions include 584-591 (GAGAFGKV), K611, and 659-665 (EYCCYGD). Phosphotyrosine; by autocatalysis is present on residues Y691 and Y708. The active-site Proton acceptor is D776. An ATP-binding site is contributed by R780. Mg(2+)-binding residues include N781 and D794. Residue Y807 is modified to Phosphotyrosine; by autocatalysis.

It belongs to the protein kinase superfamily. Tyr protein kinase family. CSF-1/PDGF receptor subfamily. Post-translationally, ubiquitinated. Rapidly ubiquitinated after autophosphorylation induced by kitlg/scf binding, leading to internalization and degradation. In terms of processing, autophosphorylated on tyrosine residues. Phosphorylated tyrosine residues are important for interaction with specific binding partners. Expressed in a migratory stem cell population.

Its subcellular location is the cell membrane. It catalyses the reaction L-tyrosyl-[protein] + ATP = O-phospho-L-tyrosyl-[protein] + ADP + H(+). Tyrosine-protein kinase that acts as a cell-surface receptor for the cytokine kitlg/scf and plays an essential role in the regulation of cell survival and proliferation, hematopoiesis, stem cell maintenance, gametogenesis, mast cell development, migration and function, and in melanogenesis. This chain is Mast/stem cell growth factor receptor-related protein Kit (kit), found in Xenopus laevis (African clawed frog).